We begin with the raw amino-acid sequence, 88 residues long: Translation initiation factor IF-1 2 (88 aa).

The 72-residue stretch at M1–L72 folds into the S1-like domain.

The protein belongs to the IF-1 family. Component of the 30S ribosomal translation pre-initiation complex which assembles on the 30S ribosome in the order IF-2 and IF-3, IF-1 and N-formylmethionyl-tRNA(fMet); mRNA recruitment can occur at any time during PIC assembly.

The protein resides in the cytoplasm. Functionally, one of the essential components for the initiation of protein synthesis. Stabilizes the binding of IF-2 and IF-3 on the 30S subunit to which N-formylmethionyl-tRNA(fMet) subsequently binds. Helps modulate mRNA selection, yielding the 30S pre-initiation complex (PIC). Upon addition of the 50S ribosomal subunit IF-1, IF-2 and IF-3 are released leaving the mature 70S translation initiation complex. This chain is Translation initiation factor IF-1 2, found in Acidovorax sp. (strain JS42).